Reading from the N-terminus, the 104-residue chain is L-rhamnose mutarotase (104 aa).

Substrate is bound at residue tyrosine 18. The active-site Proton donor is the histidine 22. Substrate-binding positions include tyrosine 41 and 76–77 (WW).

The protein belongs to the rhamnose mutarotase family. Homodimer.

Its subcellular location is the cytoplasm. It carries out the reaction alpha-L-rhamnose = beta-L-rhamnose. The protein operates within carbohydrate metabolism; L-rhamnose metabolism. Its function is as follows. Involved in the anomeric conversion of L-rhamnose. The polypeptide is L-rhamnose mutarotase (Shigella sonnei (strain Ss046)).